Here is a 698-residue protein sequence, read N- to C-terminus: Trafficking protein particle complex III-specific subunit 85 (698 aa).

Disordered regions lie at residues 82–125 and 678–698; these read VGQH…LFQR and VDSA…SFIG. Positions 678–689 are enriched in basic and acidic residues; it reads VDSAPRPSEKNL.

Belongs to the TRS85 family. As to quaternary structure, part of the multisubunit TRAPP (transport protein particle) III complex composed of BET3, BET5, TRS20, TRS23, TRS31, TRS33 and TRS85.

The protein localises to the preautophagosomal structure. In terms of biological role, specific subunit of the TRAPP III complex that acts as an autophagy-specific guanine nucleotide exchange factor (GEF) for YPT1. TRS85 directs the TRAPP III complex to the phagophore assembly site (PAS) that is involved in autophagosome formation. Required for membrane expansion during autophagy and the CVT pathway. Required for sporulation. Has a role late in meiosis following DNA replication. The sequence is that of Trafficking protein particle complex III-specific subunit 85 (TRS85) from Saccharomyces cerevisiae (strain ATCC 204508 / S288c) (Baker's yeast).